The primary structure comprises 83 residues: Type 3 secretion system needle filament protein (83 aa).

Belongs to the SctF family. The core secretion machinery of the T3SS is composed of approximately 20 different proteins, including cytoplasmic components, a base, an export apparatus and a needle. This subunit polymerizes and forms the helical needle filament. Interacts with the needle tip protein IpaD/SctA. Interacts with the export apparatus components SpaP/SctR, SpaQ/SctS and SpaR/SctT.

The protein resides in the secreted. Its subcellular location is the cell surface. Component of the type III secretion system (T3SS), also called injectisome, which is used to inject bacterial effector proteins into eukaryotic host cells. MxiH/SctF forms the external needle filament that protrudes from the bacterial surface. In terms of biological role, during infection, can induce innate immune responses. The needle proteins interact with host TLR2 or TLR4, and induce signaling by NF-kappa-B and/or AP-1. This activation is MyD88 dependent and results in increased expression of cytokines, including TNF-alpha, IL-6 and IL-8. This is Type 3 secretion system needle filament protein from Shigella flexneri.